A 603-amino-acid polypeptide reads, in one-letter code: MAATAVAAGTGSPAGTESAEGGPGAAAALELWLNKATDPSMAEQDWSAIQKFCEQVNTDPSGPTHAPWLLAHKIQSPQEKEALYALTVLEICMNHCGEKFHSEVAKFRFLNELIKVLSPKYLGAWATEKVKGRVIEILFSWTVWFPEDIKIRDAYQMLKKQGIIKQDPKLPMDKILPPPSPWPKSIFDADEEKSKLLTRLLKSNHPEDLQAANRLIKNLVKEEQEKSEKVSRRVSAVEEVRSHVRVLREMLSMYRRPGHALPDQQALQVVYERCEKLRPTLFRLASDTTDDDDALAEILQANDLLTQGVRLYKQVVEGRVSAGNAVPAAVGAIPAPRAFPNPEPCGLNCPLIDLETPSLLHQDLAALGINDVPTRNQVVIPSCCNDKKQPGAITLMGGGIQSLSADRNLLDLFSPQPSPGLNYVPQKSIPKEVPPGTKASPGWSWEAGPLASSTASQNTPLAHVFVPLESVKPSSLPPIVVYDRNGFRILLHFSQTGAPGHPDVKVLLLTMMSTATQPVWDVMFQVAVPKSMRVKLQPASSSKLPAFSPLMPPAVISQTLLLDNPHKEPIRLRYKLTFNQGGQPFSEVGEVKDFPDLAVLSTA.

A disordered region spans residues 1–22 (MAATAVAAGTGSPAGTESAEGG). A compositionally biased stretch (low complexity) spans 13-22 (PAGTESAEGG). One can recognise a VHS domain in the interval 36-166 (ATDPSMAEQD…MLKKQGIIKQ (131 aa)). The GAT domain occupies 190 to 317 (DEEKSKLLTR…GVRLYKQVVE (128 aa)). The tract at residues 318-473 (GRVSAGNAVP…VFVPLESVKP (156 aa)) is unstructured hinge. One can recognise a GAE domain in the interval 474–595 (SSLPPIVVYD…SEVGEVKDFP (122 aa)).

It belongs to the GGA protein family. As to quaternary structure, monomer. Interacts with NECAP1, TSG101, UBC and AFTPH/aftiphilin. Interacts with CNST. Interacts with GGA1 and GGA3. Binds to clathrin and activated ARFs, such as ARF1, ARF5 and ARF6. Binds RABEP1 and RABGEF1. Interacts with the type-I membrane proteins LRP3, M6PR/CD-MPR, IGF2R/CI-MPR and BACE1. Interacts (via N-terminal VHS domain) with SORL1/sorLA and SORT1 (via C-terminal cytosolic domain). Binds the accessory proteins CCDC91, P200, SYNRG, EPN4 and NECAP2. Interacts with ADRA2B. Interacts (via VHS domain) with PIK4B; the interaction is important for PIK4B location at the Golgi apparatus membrane. Ubiquitinated.

Its subcellular location is the golgi apparatus. It is found in the trans-Golgi network membrane. The protein localises to the endosome membrane. The protein resides in the early endosome membrane. Plays a role in protein sorting and trafficking between the trans-Golgi network (TGN) and endosomes. Mediates the ARF-dependent recruitment of clathrin to the TGN and binds ubiquitinated proteins and membrane cargo molecules with a cytosolic acidic cluster-dileucine (DXXLL) motif. Mediates export of the GPCR receptor ADRA2B to the cell surface. Regulates retrograde transport of phosphorylated form of BACE1 from endosomes to the trans-Golgi network. The polypeptide is ADP-ribosylation factor-binding protein GGA2 (Gga2) (Mus musculus (Mouse)).